The primary structure comprises 88 residues: Small ribosomal subunit protein uS15 (88 aa).

Belongs to the universal ribosomal protein uS15 family. Part of the 30S ribosomal subunit. Forms a bridge to the 50S subunit in the 70S ribosome, contacting the 23S rRNA.

Functionally, one of the primary rRNA binding proteins, it binds directly to 16S rRNA where it helps nucleate assembly of the platform of the 30S subunit by binding and bridging several RNA helices of the 16S rRNA. Forms an intersubunit bridge (bridge B4) with the 23S rRNA of the 50S subunit in the ribosome. The chain is Small ribosomal subunit protein uS15 from Geobacter sulfurreducens (strain ATCC 51573 / DSM 12127 / PCA).